A 128-amino-acid chain; its full sequence is Large ribosomal subunit protein bL19 (128 aa).

The protein belongs to the bacterial ribosomal protein bL19 family.

Its function is as follows. This protein is located at the 30S-50S ribosomal subunit interface and may play a role in the structure and function of the aminoacyl-tRNA binding site. The protein is Large ribosomal subunit protein bL19 of Verminephrobacter eiseniae (strain EF01-2).